The following is a 419-amino-acid chain: Arginine biosynthesis bifunctional protein ArgJ 1, mitochondrial (419 aa).

Substrate contacts are provided by lysine 177, threonine 188, glutamate 275, asparagine 414, and threonine 419. Threonine 188 functions as the Nucleophile in the catalytic mechanism.

This sequence belongs to the ArgJ family. In terms of assembly, heterodimer of an alpha and a beta chain. In terms of processing, the alpha and beta chains are autoproteolytically processed from a single precursor protein within the mitochondrion.

The protein resides in the mitochondrion matrix. The enzyme catalyses N(2)-acetyl-L-ornithine + L-glutamate = N-acetyl-L-glutamate + L-ornithine. It catalyses the reaction L-glutamate + acetyl-CoA = N-acetyl-L-glutamate + CoA + H(+). The protein operates within amino-acid biosynthesis; L-arginine biosynthesis; L-ornithine and N-acetyl-L-glutamate from L-glutamate and N(2)-acetyl-L-ornithine (cyclic): step 1/1. It participates in amino-acid biosynthesis; L-arginine biosynthesis; N(2)-acetyl-L-ornithine from L-glutamate: step 1/4. Its function is as follows. Catalyzes two activities which are involved in the cyclic version of arginine biosynthesis: the synthesis of acetylglutamate from glutamate and acetyl-CoA, and of ornithine by transacetylation between acetylornithine and glutamate. The protein is Arginine biosynthesis bifunctional protein ArgJ 1, mitochondrial of Sclerotinia sclerotiorum (strain ATCC 18683 / 1980 / Ss-1) (White mold).